The following is a 1063-amino-acid chain: Structural polyprotein (1063 aa).

Residues 1-131 (MASTTPITME…LGPPTNPFQA (131 aa)) form a disordered region. The human C1QBP/SF2P32-binding stretch occupies residues 30–69 (GASQSRRPRPPRQRDSSTSGDDSGRDSGGPRRRRGNRGRG). Phosphoserine; by host is present on Ser46. Residues 59–69 (PRRRRGNRGRG) are compositionally biased toward basic residues. Residues 93–107 (APKPSRAPPQQPQPP) are compositionally biased toward pro residues. The cysteines at positions 153 and 197 are disulfide-linked. The interval 279–300 (GAPQAFLAGLLLAAVAVGTARA) is functions as E2 signal peptide. Over 301–534 (GLQPRADMAA…LWLATANALS (234 aa)) the chain is Extracellular. The disordered stretch occupies residues 305–347 (RADMAAPPAPPQPPCAHGQHYGHHHHQLPFLGHDGHHGGTLRV). Asn353, Asn371, Asn410, and Asn429 each carry an N-linked (GlcNAc...) asparagine; by host glycan. A helical transmembrane segment spans residues 535–555 (LDHALAAFVLLFPWVLIFMVC). Residues 556-582 (RRACRRRGAAAALTAVVLQGYNPPAYG) are Cytoplasmic-facing. Residues 563 to 582 (GAAAALTAVVLQGYNPPAYG) are functions as E1 signal peptide. At 583–1028 (EEAFTYLCTA…QTWAEWAAAH (446 aa)) the chain is on the extracellular side. Intrachain disulfides connect Cys590-Cys595, Cys619-Cys824, Cys641-Cys653, Cys699-Cys712, Cys758-Cys767, Cys807-Cys817, Cys931-Cys934, and Cys950-Cys983. N-linked (GlcNAc...) asparagine; by host glycosylation occurs at Asn658. Residues Asn670 and Ala671 each coordinate Ca(2+). Residues Asp718 and Thr719 each contribute to the Ca(2+) site. N-linked (GlcNAc...) asparagine; by host glycosylation is found at Asn759 and Asn791. Residues Thr1011 and Thr1012 are each glycosylated (O-linked (GalNAc...) threonine; by host). The helical transmembrane segment at 1029–1049 (WWQLTLGAVCALLLAGLLACC) threads the bilayer. Topologically, residues 1050-1063 (AKCLYYLRGAIAPR) are extracellular.

As to quaternary structure, homodimer; further assembles into homooligomer. Interacts with human C1QBP. Interacts (via N-terminus) with protease/methyltransferase p150. In terms of assembly, heterodimer with spike glycoprotein E2. Heterodimer with spike glycoprotein E1. In terms of processing, structural polyprotein: Specific enzymatic cleavages in vivo yield mature proteins. Two signal peptidase-mediated cleavages within the polyprotein produce the structural proteins capsid, E2, and E1. The E2 signal peptide remains attached to the C-terminus of the capsid protein after cleavage by the signal peptidase. Another signal peptide at E2 C-terminus directs E1 to the ER, with a similar mechanism. Contains three N-linked oligosaccharides. Post-translationally, capsid is phosphorylated on Ser-46 by host. This phosphorylation negatively regulates capsid protein RNA-binding activity. Dephosphorylated by human PP1A.

It localises to the virion. Its subcellular location is the host cytoplasm. The protein localises to the host mitochondrion. It is found in the virion membrane. The protein resides in the host Golgi apparatus membrane. Functionally, capsid protein interacts with genomic RNA and assembles into icosahedric core particles 65-70 nm in diameter. The resulting nucleocapsid eventually associates with the cytoplasmic domain of E2 at the cell membrane, leading to budding and formation of mature virions from host Golgi membranes. Phosphorylation negatively regulates RNA-binding activity, possibly delaying virion assembly during the viral replication phase. Capsid protein dimerizes and becomes disulfide-linked in the virion. Modulates genomic RNA replication. Modulates subgenomic RNA synthesis by interacting with human C1QBP/SF2P32. Induces both perinuclear clustering of mitochondria and the formation of electron-dense intermitochondrial plaques, both hallmarks of rubella virus infected cells. Induces apoptosis when expressed in transfected cells. Its function is as follows. Responsible for viral attachment to target host cell, by binding to the cell receptor. Its transport to the plasma membrane depends on interaction with E1 protein. The surface glycoproteins display an irregular helical organization and a pseudo-tetrameric inner nucleocapsid arrangement. In terms of biological role, class II viral fusion protein. Fusion activity is inactive as long as E1 is bound to E2 in mature virion. After virus attachment to target cell and clathrin-mediated endocytosis, acidification of the endosome would induce dissociation of E1/E2 heterodimer and concomitant trimerization of the E1 subunits. This E1 homotrimer is fusion active, and promotes release of viral nucleocapsid in cytoplasm after endosome and viral membrane fusion. The cytoplasmic tail of spike glycoprotein E1 modulates virus release. The surface glycoproteins display an irregular helical organization and a pseudo-tetrameric inner nucleocapsid arrangement. This Rubella virus (strain RN-UK86) (RUBV) protein is Structural polyprotein.